Reading from the N-terminus, the 148-residue chain is uncharacterized protein (148 aa).

Residues 4–65 (MDKVDLQLIK…IPNLEKLNYM (62 aa)) enclose the HTH asnC-type domain. Positions 23–42 (YRELAEMLGTTRQRVARKVD) form a DNA-binding region, H-T-H motif.

This is an uncharacterized protein from Pyrococcus furiosus (strain ATCC 43587 / DSM 3638 / JCM 8422 / Vc1).